The primary structure comprises 96 residues: Aspartyl/glutamyl-tRNA(Asn/Gln) amidotransferase subunit C (96 aa).

It belongs to the GatC family. In terms of assembly, heterotrimer of A, B and C subunits.

The catalysed reaction is L-glutamyl-tRNA(Gln) + L-glutamine + ATP + H2O = L-glutaminyl-tRNA(Gln) + L-glutamate + ADP + phosphate + H(+). The enzyme catalyses L-aspartyl-tRNA(Asn) + L-glutamine + ATP + H2O = L-asparaginyl-tRNA(Asn) + L-glutamate + ADP + phosphate + 2 H(+). Its function is as follows. Allows the formation of correctly charged Asn-tRNA(Asn) or Gln-tRNA(Gln) through the transamidation of misacylated Asp-tRNA(Asn) or Glu-tRNA(Gln) in organisms which lack either or both of asparaginyl-tRNA or glutaminyl-tRNA synthetases. The reaction takes place in the presence of glutamine and ATP through an activated phospho-Asp-tRNA(Asn) or phospho-Glu-tRNA(Gln). The chain is Aspartyl/glutamyl-tRNA(Asn/Gln) amidotransferase subunit C from Acaryochloris marina (strain MBIC 11017).